The sequence spans 81 residues: MRTTIDVAGRLVIPKRIRERLGLRGNDQVEITERDGRIEIEPAPTGVELVREGSVLVARPERPLPPLTDEIVRETLDRTRR.

The SpoVT-AbrB domain occupies 1 to 45; the sequence is MRTTIDVAGRLVIPKRIRERLGLRGNDQVEITERDGRIEIEPAPT.

The protein to B.subtilis SpoVT.

This is an uncharacterized protein from Mycobacterium bovis (strain ATCC BAA-935 / AF2122/97).